The sequence spans 803 residues: Putative metal ion transporter C27B12.12c (803 aa).

Positions 1–20 are enriched in polar residues; it reads MSFQQPSNGAQGGNNNALEK. Residues 1–255 are disordered; it reads MSFQQPSNGA…SSDVSGSDEN (255 aa). Over residues 21–45 the composition is skewed to low complexity; that stretch reads TSSNEATSSSSTQVSSLSASGISVS. The segment covering 58 to 82 has biased composition (polar residues); sequence MQVQSSQHLEANVQSPVSSQTTYAT. Composition is skewed to basic residues over residues 105–123 and 152–166; these read KPKK…RKKI and QSNK…KHSP. 2 stretches are compositionally biased toward low complexity: residues 181 to 194 and 218 to 253; these read ALSA…QHAS and SSSS…SGSD. Ser318 is subject to Phosphoserine. Disordered stretches follow at residues 326–349 and 406–431; these read PRLK…QVDE and FEPH…NNAE. Residues 337–347 show a composition bias toward acidic residues; sequence DNEDREVDSQV. The segment covering 406–419 has biased composition (basic and acidic residues); sequence FEPHWNDLSPHDPN. Over residues 420–430 the composition is skewed to polar residues; the sequence is DPSSSLHSNNA. Ser449 and Ser452 each carry phosphoserine. 2 helical membrane passes run 745-765 and 776-796; these read ITLI…FGMN and LAWF…GWII.

The protein belongs to the CorA metal ion transporter (MIT) (TC 1.A.35) family.

Its subcellular location is the cytoplasm. The protein localises to the membrane. The sequence is that of Putative metal ion transporter C27B12.12c from Schizosaccharomyces pombe (strain 972 / ATCC 24843) (Fission yeast).